Reading from the N-terminus, the 65-residue chain is Large ribosomal subunit protein uL29 (65 aa).

The tract at residues 30 to 49 is disordered; sequence ERSSVAMGGAPSSPGKMRSI.

Belongs to the universal ribosomal protein uL29 family.

The sequence is that of Large ribosomal subunit protein uL29 from Picrophilus torridus (strain ATCC 700027 / DSM 9790 / JCM 10055 / NBRC 100828 / KAW 2/3).